The following is a 243-amino-acid chain: MLTFLIPTAKEMMIPKESHPHLLPQDSQAILKIMAAMTTEDLAKSYRIKEEAAKKEQQRWQDMASQQSLAYPAYQLFNGLMYRHIKRDKLTTQEQAYLTQQVYITSSFYGIIPANHPIAEHRHDFHTRIKIEGQSLKSYWRPCYNQFAKEHPQVISLLSSEFDDVFSKDCKQLWISPKFMAEKEGQFKTHSTISKKARGAFLTACMENNCQTVDSLKSLVFAGFYYHPDLSTDHEFVYIKKEA.

Belongs to the UPF0246 family.

The protein is UPF0246 protein Spy49_1742 of Streptococcus pyogenes serotype M49 (strain NZ131).